Consider the following 88-residue polypeptide: HssA/B-like protein 12 (88 aa).

It belongs to the hssA/B family.

This chain is HssA/B-like protein 12 (hssl12), found in Dictyostelium discoideum (Social amoeba).